The following is a 381-amino-acid chain: MVNYHGRKEVSNILTSEEYEELKGQNFLKLSVSKTEYFDLFLLGVGLYAPLEGFMDEDDYYSTLEQFTLSSGFLWSIPIVLRVSEEEARLYDGREKVLLTAANGELLGLLESPRAFKLNKILEVEKVFKTSSPEHPGVQKILGEDEWAVAGKIKIYPPAFREIDLNLSLFPQKTREIFKSRNYKTVVGFQTRNPIHRAHEYLQKIALEIFDGLFVNPLVGETKGDDIPADVRLKCYEALLNNYYPKDRFVFATLPAPMRYAGPREAVHHAIIRQNYGCTHFIVGRDHAGVGNFYGPFEAQEIFDTFPENALEIKIVKFDNAFYCSKCGQMATKKTCPHGPEHHLSLSGTKVREMLREGKPLPEEFTRPEVAEVLRRYYQSL.

Belongs to the sulfate adenylyltransferase family.

The enzyme catalyses sulfate + ATP + H(+) = adenosine 5'-phosphosulfate + diphosphate. It functions in the pathway sulfur metabolism; hydrogen sulfide biosynthesis; sulfite from sulfate: step 1/3. This chain is Sulfate adenylyltransferase, found in Carboxydothermus hydrogenoformans (strain ATCC BAA-161 / DSM 6008 / Z-2901).